Consider the following 401-residue polypeptide: MDVDRLQEALKDFEKRGKKEASSELDQFLCHVAKTGETVVQWPQFKEYFVFKLEKVMDDFRSSAPDQRGSPNPNVEYIPFDEMKQRILKIVTGFNGTPFTIQRLCELLTDPRRNYTGTDKFLRGVEKNVMVVSCVYPSSEKNSSTSLNRMNGVMFPSNSQSYTDRSNVNGPGTPRPVNRPKFSLSSPMTTNGLPDSMENNESDLQQKEKSQSDSVASEDESQATTPKNKHSAEDSAETEEHEVKRLKFDTEEEEAACANPDASSEVSTEMAEEAESASASADKDKESCQSAQAADEESLMTPSESTEADSGERDSETVSVTEESSEESHQMEESEQSETACSLNSEEQNSAAAAASTVGTDTSEEEHLGTFGVKSTETLTLSPMENSEEATDAPEEPMDQD.

Polar residues-rich tracts occupy residues 139–149 (SEKNSSTSLNR), 156–170 (PSNS…NVNG), 183–203 (SLSS…NESD), 339–349 (TACSLNSEEQN), and 373–385 (VKST…SPME). The disordered stretch occupies residues 139–401 (SEKNSSTSLN…DAPEEPMDQD (263 aa)). A compositionally biased stretch (acidic residues) spans 386-401 (NSEEATDAPEEPMDQD).

The protein belongs to the PPP4R2 family. Serine/threonine-protein phosphatase 4 (PP4) occurs in different assemblies of the catalytic and one or more regulatory subunits.

In terms of biological role, regulatory subunit of serine/threonine-protein phosphatase 4 (PP4). The protein is Serine/threonine-protein phosphatase 4 regulatory subunit 2 (ppp4r2) of Xenopus tropicalis (Western clawed frog).